The following is a 504-amino-acid chain: Ribose import ATP-binding protein RbsA (504 aa).

ABC transporter domains follow at residues 6-242 (LELN…VGRR) and 250-495 (IDVQ…VGKT). 38 to 45 (GENGAGKS) is an ATP binding site.

Belongs to the ABC transporter superfamily. Ribose importer (TC 3.A.1.2.1) family. As to quaternary structure, the complex is composed of an ATP-binding protein (RbsA), two transmembrane proteins (RbsC) and a solute-binding protein (RbsB).

It localises to the cell inner membrane. The enzyme catalyses D-ribose(out) + ATP + H2O = D-ribose(in) + ADP + phosphate + H(+). Functionally, part of the ABC transporter complex RbsABC involved in ribose import. Responsible for energy coupling to the transport system. The chain is Ribose import ATP-binding protein RbsA from Aliivibrio fischeri (strain ATCC 700601 / ES114) (Vibrio fischeri).